Consider the following 171-residue polypeptide: Ribosome maturation factor RimM (171 aa).

Residues 97–170 (EGEYYYHEVI…QVTIHVMEGL (74 aa)) enclose the PRC barrel domain.

The protein belongs to the RimM family. Binds ribosomal protein uS19.

The protein resides in the cytoplasm. In terms of biological role, an accessory protein needed during the final step in the assembly of 30S ribosomal subunit, possibly for assembly of the head region. Essential for efficient processing of 16S rRNA. May be needed both before and after RbfA during the maturation of 16S rRNA. It has affinity for free ribosomal 30S subunits but not for 70S ribosomes. This is Ribosome maturation factor RimM from Bacillus cytotoxicus (strain DSM 22905 / CIP 110041 / 391-98 / NVH 391-98).